The primary structure comprises 353 residues: Phospho-N-acetylmuramoyl-pentapeptide-transferase (353 aa).

Transmembrane regions (helical) follow at residues 24–44 (LGFF…ILWA), 66–86 (TPTM…LLCA), 88–108 (LGNP…FVGF), 129–149 (FGML…KGLD), 160–180 (PLFE…FLSA), 192–212 (GLAS…VYVA), 229–249 (VGEL…FLWY), 256–276 (VFMG…NAIV), 281–301 (ILLV…ILQV), and 330–350 (KVIV…LLSL).

The protein belongs to the glycosyltransferase 4 family. MraY subfamily. Requires Mg(2+) as cofactor.

Its subcellular location is the cell inner membrane. The enzyme catalyses UDP-N-acetyl-alpha-D-muramoyl-L-alanyl-gamma-D-glutamyl-meso-2,6-diaminopimeloyl-D-alanyl-D-alanine + di-trans,octa-cis-undecaprenyl phosphate = di-trans,octa-cis-undecaprenyl diphospho-N-acetyl-alpha-D-muramoyl-L-alanyl-D-glutamyl-meso-2,6-diaminopimeloyl-D-alanyl-D-alanine + UMP. It participates in cell wall biogenesis; peptidoglycan biosynthesis. Its function is as follows. Catalyzes the initial step of the lipid cycle reactions in the biosynthesis of the cell wall peptidoglycan: transfers peptidoglycan precursor phospho-MurNAc-pentapeptide from UDP-MurNAc-pentapeptide onto the lipid carrier undecaprenyl phosphate, yielding undecaprenyl-pyrophosphoryl-MurNAc-pentapeptide, known as lipid I. The protein is Phospho-N-acetylmuramoyl-pentapeptide-transferase of Helicobacter acinonychis (strain Sheeba).